Consider the following 345-residue polypeptide: Protein RecA (345 aa).

Residue 66–73 (GPESSGKT) participates in ATP binding.

This sequence belongs to the RecA family.

The protein resides in the cytoplasm. Can catalyze the hydrolysis of ATP in the presence of single-stranded DNA, the ATP-dependent uptake of single-stranded DNA by duplex DNA, and the ATP-dependent hybridization of homologous single-stranded DNAs. It interacts with LexA causing its activation and leading to its autocatalytic cleavage. The chain is Protein RecA from Frankia casuarinae (strain DSM 45818 / CECT 9043 / HFP020203 / CcI3).